A 443-amino-acid chain; its full sequence is ATP-dependent protease ATPase subunit HslU (443 aa).

ATP contacts are provided by residues Ile-18, Gly-60–Glu-65, Asp-256, Glu-321, and Arg-393.

Belongs to the ClpX chaperone family. HslU subfamily. As to quaternary structure, a double ring-shaped homohexamer of HslV is capped on each side by a ring-shaped HslU homohexamer. The assembly of the HslU/HslV complex is dependent on binding of ATP.

Its subcellular location is the cytoplasm. ATPase subunit of a proteasome-like degradation complex; this subunit has chaperone activity. The binding of ATP and its subsequent hydrolysis by HslU are essential for unfolding of protein substrates subsequently hydrolyzed by HslV. HslU recognizes the N-terminal part of its protein substrates and unfolds these before they are guided to HslV for hydrolysis. The protein is ATP-dependent protease ATPase subunit HslU of Histophilus somni (strain 2336) (Haemophilus somnus).